The sequence spans 263 residues: Small ribosomal subunit protein uS2 (263 aa).

A disordered region spans residues 223-246 (KSLLEQDSDANADEAEVSQEEKDA). The span at 228 to 240 (QDSDANADEAEVS) shows a compositional bias: acidic residues.

It belongs to the universal ribosomal protein uS2 family.

This is Small ribosomal subunit protein uS2 from Campylobacter curvus (strain 525.92).